A 160-amino-acid polypeptide reads, in one-letter code: Protein MGF 300-2R (160 aa).

This sequence belongs to the asfivirus MGF 300 family.

Functionally, plays a role in virus cell tropism, and may be required for efficient virus replication in macrophages. The polypeptide is Protein MGF 300-2R (African swine fever virus (isolate Tick/South Africa/Pretoriuskop Pr4/1996) (ASFV)).